The sequence spans 249 residues: tRNA pseudouridine synthase A (249 aa).

The Nucleophile role is filled by D54. Y112 is a binding site for substrate.

It belongs to the tRNA pseudouridine synthase TruA family. Homodimer.

It catalyses the reaction uridine(38/39/40) in tRNA = pseudouridine(38/39/40) in tRNA. In terms of biological role, formation of pseudouridine at positions 38, 39 and 40 in the anticodon stem and loop of transfer RNAs. This Latilactobacillus sakei subsp. sakei (strain 23K) (Lactobacillus sakei subsp. sakei) protein is tRNA pseudouridine synthase A.